We begin with the raw amino-acid sequence, 134 residues long: Beta-synuclein (134 aa).

2 repeat units span residues 20-30 (EKTKQGVTEAA) and 31-41 (EKTKEGVLYVG). The tract at residues 20-67 (EKTKQGVTEAAEKTKEGVLYVGSKTREGVVQGVASVAEKTKEQASHLG) is 4 X 11 AA tandem repeats of [EGS]-K-T-K-[EQ]-[GQ]-V-X(4). The 3; approximate repeat unit spans residues 42 to 56 (SKTREGVVQGVASVA). Copy 4 of the repeat occupies 57–67 (EKTKEQASHLG). The interval 89 to 134 (FPTDLKPEEVAQEAAEEPLIEPLMEPEGESYEDPPQEEYQEYEPEA) is disordered. Residues 98–134 (VAQEAAEEPLIEPLMEPEGESYEDPPQEEYQEYEPEA) show a composition bias toward acidic residues. At Ser118 the chain carries Phosphoserine; by BARK1, CK2 and GRK5.

It belongs to the synuclein family. Phosphorylated. Phosphorylation by G-protein coupled receptor kinases (GRK) is more efficient than phosphorylation by CK1, CK2 and CaM-kinase II. In terms of tissue distribution, expressed predominantly in brain; concentrated in presynaptic nerve terminals.

The protein localises to the cytoplasm. In terms of biological role, non-amyloid component of senile plaques found in Alzheimer disease. Could act as a regulator of SNCA aggregation process. Protects neurons from staurosporine and 6-hydroxy dopamine (6OHDA)-stimulated caspase activation in a p53/TP53-dependent manner. Contributes to restore the SNCA anti-apoptotic function abolished by 6OHDA. Not found in the Lewy bodies associated with Parkinson disease. This is Beta-synuclein (SNCB) from Homo sapiens (Human).